The following is a 67-amino-acid chain: Potassium channel toxin alpha-KTx 6.16 (67 aa).

Residues 1-24 form the signal peptide; sequence MNLKLALVLLLTVINVGMLPGATS. Cystine bridges form between Cys-34-Cys-55, Cys-40-Cys-60, Cys-44-Cys-62, and Cys-50-Cys-65.

Belongs to the short scorpion toxin superfamily. Potassium channel inhibitor family. Alpha-KTx 06 subfamily. In terms of tissue distribution, expressed by the venom gland.

It localises to the secreted. Inhibits voltage-gated potassium channels. This Opisthacanthus cayaporum (South American scorpion) protein is Potassium channel toxin alpha-KTx 6.16.